We begin with the raw amino-acid sequence, 358 residues long: Adenosine deaminase (358 aa).

Positions 14 and 16 each coordinate Zn(2+). 3 residues coordinate substrate: His16, Asp18, and Gly183. His212 is a binding site for Zn(2+). Glu215 (proton donor) is an active-site residue. Asp294 provides a ligand contact to Zn(2+). Residue Asp295 coordinates substrate.

This sequence belongs to the metallo-dependent hydrolases superfamily. Adenosine and AMP deaminases family. The cofactor is Zn(2+).

The protein localises to the cell membrane. Its subcellular location is the cell junction. It is found in the cytoplasmic vesicle lumen. It localises to the cytoplasm. The protein resides in the lysosome. The catalysed reaction is adenosine + H2O + H(+) = inosine + NH4(+). It catalyses the reaction 2'-deoxyadenosine + H2O + H(+) = 2'-deoxyinosine + NH4(+). In terms of biological role, catalyzes the hydrolytic deamination of adenosine and 2-deoxyadenosine. Plays an important role in purine metabolism and in adenosine homeostasis. Modulates signaling by extracellular adenosine, and so contributes indirectly to cellular signaling events. May act as a positive regulator of T-cell coactivation. The chain is Adenosine deaminase (ada) from Xenopus laevis (African clawed frog).